The primary structure comprises 614 residues: tRNA uridine 5-carboxymethylaminomethyl modification enzyme MnmG (614 aa).

Residue 10–15 (GAGHAG) coordinates FAD. NAD(+) is bound at residue 271–285 (GPRYCPSIEDKIVKF).

It belongs to the MnmG family. As to quaternary structure, homodimer. Heterotetramer of two MnmE and two MnmG subunits. Requires FAD as cofactor.

It is found in the cytoplasm. NAD-binding protein involved in the addition of a carboxymethylaminomethyl (cmnm) group at the wobble position (U34) of certain tRNAs, forming tRNA-cmnm(5)s(2)U34. This Ureaplasma urealyticum serovar 10 (strain ATCC 33699 / Western) protein is tRNA uridine 5-carboxymethylaminomethyl modification enzyme MnmG.